A 400-amino-acid polypeptide reads, in one-letter code: Large envelope protein (400 aa).

The residue at position 1 (Met1) is an N-acetylmethionine. Disordered regions lie at residues 1–20 (MGGW…SVPN) and 88–115 (VSTI…LRDS). Gly2 carries the N-myristoyl glycine; by host lipid modification. The pre-S1 stretch occupies residues 2–119 (GGWSSKPRKG…PPLRDSHPQA (118 aa)). The pre-S stretch occupies residues 2–174 (GGWSSKPRKG…SARTGDPVTN (173 aa)). The Virion surface; in external conformation segment spans residues 2-181 (GGWSSKPRKG…VTNMENITSG (180 aa)). Residues 2 to 253 (GGWSSKPRKG…PGYRWMCLRR (252 aa)) are Intravirion; in internal conformation-facing. Trp4 is a glycosylation site (N-linked (GlcNAc...) asparagine). Residues 88–106 (VSTIPPPASTNRQSGRQPT) show a composition bias toward polar residues. The interval 120–174 (MQWNSTAFHQTLQDPRVRGLYLPAGGSSSGTVNPAPNIASHISSISARTGDPVTN) is pre-S2. A helical transmembrane segment spans residues 182–202 (FLGPLLVLQAGFFLLTRILTI). At 203–253 (PQSLDSWWTSLNFLGGSPVCLGQNSQSPTSNHSPTSCPPICPGYRWMCLRR) the chain is on the intravirion; in external conformation side. A helical membrane pass occupies residues 254 to 274 (FIIFLFILLLCLIFLLVLLDY). The Virion surface portion of the chain corresponds to 275–348 (QGMLPVCPLI…WASVRFSWLS (74 aa)). The N-linked (GlcNAc...) asparagine; by host glycan is linked to Asn320. The helical transmembrane segment at 349-369 (LLVPFVQWFVGLSPTVWLSAI) threads the bilayer. The Intravirion segment spans residues 370-375 (WMMWYW). A helical membrane pass occupies residues 376-398 (GPSLYSIVRPFIPLLPIFFCLWV). Over 399-400 (YI) the chain is Virion surface.

It belongs to the orthohepadnavirus major surface antigen family. In its internal form (Li-HBsAg), interacts with the capsid protein and with the isoform S. Interacts with host chaperone CANX. In terms of assembly, associates with host chaperone CANX through its pre-S2 N glycan; this association may be essential for isoform M proper secretion. As to quaternary structure, interacts with isoform L. Interacts with the antigens of satellite virus HDV (HDVAgs); this interaction is required for encapsidation of HDV genomic RNA. In terms of processing, isoform M is N-terminally acetylated by host at a ratio of 90%, and N-glycosylated by host at the pre-S2 region. Myristoylated.

Its subcellular location is the virion membrane. Its function is as follows. The large envelope protein exists in two topological conformations, one which is termed 'external' or Le-HBsAg and the other 'internal' or Li-HBsAg. In its external conformation the protein attaches the virus to cell receptors and thereby initiating infection. This interaction determines the species specificity and liver tropism. This attachment induces virion internalization predominantly through caveolin-mediated endocytosis. The large envelope protein also assures fusion between virion membrane and endosomal membrane. In its internal conformation the protein plays a role in virion morphogenesis and mediates the contact with the nucleocapsid like a matrix protein. The middle envelope protein plays an important role in the budding of the virion. It is involved in the induction of budding in a nucleocapsid independent way. In this process the majority of envelope proteins bud to form subviral lipoprotein particles of 22 nm of diameter that do not contain a nucleocapsid. This is Large envelope protein from Homo sapiens (Human).